Here is a 146-residue protein sequence, read N- to C-terminus: Ribonuclease P protein component (146 aa).

Belongs to the RnpA family. Consists of a catalytic RNA component (M1 or rnpB) and a protein subunit.

It carries out the reaction Endonucleolytic cleavage of RNA, removing 5'-extranucleotides from tRNA precursor.. Functionally, RNaseP catalyzes the removal of the 5'-leader sequence from pre-tRNA to produce the mature 5'-terminus. It can also cleave other RNA substrates such as 4.5S RNA. The protein component plays an auxiliary but essential role in vivo by binding to the 5'-leader sequence and broadening the substrate specificity of the ribozyme. This is Ribonuclease P protein component from Chlorobium phaeobacteroides (strain DSM 266 / SMG 266 / 2430).